The chain runs to 234 residues: Interleukin-34 (234 aa).

The first 20 residues, 1-20, serve as a signal peptide directing secretion; that stretch reads MPWGLAWLYCLGILLDVALG. Asn99 carries N-linked (GlcNAc...) asparagine glycosylation. A disordered region spans residues 215–234; that stretch reads PRQPPTSLPRSPSSNHGPLP. Positions 222 to 234 are enriched in polar residues; sequence LPRSPSSNHGPLP.

The protein belongs to the IL-34 family. In terms of assembly, homodimer. Interacts with CSF1R.

Its subcellular location is the secreted. Functionally, cytokine that promotes the proliferation, survival and differentiation of monocytes and macrophages. Promotes the release of pro-inflammatory chemokines, and thereby plays an important role in innate immunity and in inflammatory processes. Plays an important role in the regulation of osteoclast proliferation and differentiation, and in the regulation of bone resorption. Signaling via CSF1R and its downstream effectors stimulates phosphorylation of MAPK1/ERK2 AND MAPK3/ERK1. The polypeptide is Interleukin-34 (Il34) (Rattus norvegicus (Rat)).